Here is a 173-residue protein sequence, read N- to C-terminus: ATP synthase subunit b (173 aa).

The helical transmembrane segment at 20-40 (IIATLAIFLVLMFLLKKVAWG) threads the bilayer.

Belongs to the ATPase B chain family. As to quaternary structure, F-type ATPases have 2 components, F(1) - the catalytic core - and F(0) - the membrane proton channel. F(1) has five subunits: alpha(3), beta(3), gamma(1), delta(1), epsilon(1). F(0) has three main subunits: a(1), b(2) and c(10-14). The alpha and beta chains form an alternating ring which encloses part of the gamma chain. F(1) is attached to F(0) by a central stalk formed by the gamma and epsilon chains, while a peripheral stalk is formed by the delta and b chains.

Its subcellular location is the cell membrane. In terms of biological role, f(1)F(0) ATP synthase produces ATP from ADP in the presence of a proton or sodium gradient. F-type ATPases consist of two structural domains, F(1) containing the extramembraneous catalytic core and F(0) containing the membrane proton channel, linked together by a central stalk and a peripheral stalk. During catalysis, ATP synthesis in the catalytic domain of F(1) is coupled via a rotary mechanism of the central stalk subunits to proton translocation. Its function is as follows. Component of the F(0) channel, it forms part of the peripheral stalk, linking F(1) to F(0). In Lysinibacillus sphaericus (strain C3-41), this protein is ATP synthase subunit b.